A 56-amino-acid polypeptide reads, in one-letter code: Potassium channel toxin alpha-KTx 9.2 (56 aa).

An N-terminal signal peptide occupies residues 1–28 (MSRLFTLVLIVLAMNVMMAIISDPVVEA). Intrachain disulfides connect C31/C47, C34/C52, and C38/C54.

In terms of tissue distribution, expressed by the venom gland.

Its subcellular location is the secreted. In terms of biological role, blocks small conductance calcium-activated potassium channels (KCNN, SK). Low toxicity by intracerebroventricular injection into mice. The protein is Potassium channel toxin alpha-KTx 9.2 of Olivierus martensii (Manchurian scorpion).